Consider the following 832-residue polypeptide: Protein monoglycylase TTLL8 (832 aa).

The span at 1-13 shows a compositional bias: pro residues; the sequence is MSCPPTPNPPFRP. Disordered stretches follow at residues 1–84 and 277–304; these read MSCP…QDLS and GKSK…KLPS. Basic and acidic residues-rich tracts occupy residues 46–59, 66–75, and 280–299; these read QLRE…ERKK, DGDHKEENKL, and KKEE…ENPD. Residues 271–624 enclose the TTL domain; it reads YCSKVKGKSK…RKLDRNCDIG (354 aa). Residues Lys397, 403-404, 435-438, 448-450, and 492-493 contribute to the ATP site; these read RG, QKYI, KFD, and CN. An a protein-binding site is contributed by Arg403. Ser495 provides a ligand contact to L-glutamate. 3 residues coordinate Mg(2+): Asp570, Glu583, and Asn585. Glu583 is an ATP binding site.

Mg(2+) is required as a cofactor. In terms of tissue distribution, highly expressed in testis. Expressed in brain, heart, kidney, liver, lung, muscle, spleen and trachea. Expressed in sperm flagellum. In the brain, specifically expressed in ependymal cilia.

It localises to the cytoplasm. Its subcellular location is the cytoskeleton. The protein resides in the cell projection. The protein localises to the cilium. It is found in the cilium axoneme. It localises to the flagellum axoneme. The catalysed reaction is L-glutamyl-[protein] + glycine + ATP = glycyl-L-glutamyl-[protein] + ADP + phosphate + H(+). Its function is as follows. Monoglycylase which modifies both tubulin and non-tubulin proteins, adding a single glycine on the gamma-carboxyl groups of specific glutamate residues to generate monoglycine side chains within the C-terminal tail of target proteins. Not involved in elongation step of the polyglycylation reaction. Preferentially monoglycylates alpha-tubulin over beta-tubulin. Together with TTLL3, mediates microtubule glycylation of primary and motile cilia, which is essential for their stability and maintenance. Together with TTLL3, glycylates sperm flagella which regulates axonemal dynein motor activity, thereby controlling flagellar beat, directional sperm swimming and male fertility. Monoglycylates non-tubulin proteins such as ANP32A, ANP32B, SET, NCL and NAP1. The protein is Protein monoglycylase TTLL8 of Mus musculus (Mouse).